Reading from the N-terminus, the 723-residue chain is Capsid protein (723 aa).

Residues 658–679 (QATPPPFKKPRTEDQEENPEET) are disordered.

This sequence belongs to the anelloviridae capsid protein family.

The protein localises to the virion. In terms of biological role, self assemble to form an icosahedral capsid. This chain is Capsid protein, found in Torque teno virus (isolate Japanese macaque/Japan/Mf-TTV9/2000) (TTV).